The following is a 155-amino-acid chain: Arginine repressor (155 aa).

It belongs to the ArgR family.

Its subcellular location is the cytoplasm. The protein operates within amino-acid biosynthesis; L-arginine biosynthesis [regulation]. In terms of biological role, regulates arginine biosynthesis genes. In Histophilus somni (strain 2336) (Haemophilus somnus), this protein is Arginine repressor.